Consider the following 193-residue polypeptide: Ribonuclease HII (193 aa).

In terms of domain architecture, RNase H type-2 spans 15–193 (YIVAGIDEAG…PYHRKSFKCC (179 aa)). A divalent metal cation-binding residues include Asp21, Glu22, and Asp112.

Belongs to the RNase HII family. Mn(2+) serves as cofactor. It depends on Mg(2+) as a cofactor.

The protein resides in the cytoplasm. It carries out the reaction Endonucleolytic cleavage to 5'-phosphomonoester.. Its function is as follows. Endonuclease that specifically degrades the RNA of RNA-DNA hybrids. The protein is Ribonuclease HII of Rickettsia akari (strain Hartford).